A 434-amino-acid polypeptide reads, in one-letter code: Histidinol dehydrogenase (434 aa).

Residues Tyr130, Gln191, and Asn214 each contribute to the NAD(+) site. Ser237, Gln259, and His262 together coordinate substrate. Residues Gln259 and His262 each contribute to the Zn(2+) site. Catalysis depends on proton acceptor residues Glu327 and His328. The substrate site is built by His328, Asp361, Glu415, and His420. A Zn(2+)-binding site is contributed by Asp361. Residue His420 participates in Zn(2+) binding.

This sequence belongs to the histidinol dehydrogenase family. The cofactor is Zn(2+).

It carries out the reaction L-histidinol + 2 NAD(+) + H2O = L-histidine + 2 NADH + 3 H(+). It functions in the pathway amino-acid biosynthesis; L-histidine biosynthesis; L-histidine from 5-phospho-alpha-D-ribose 1-diphosphate: step 9/9. Catalyzes the sequential NAD-dependent oxidations of L-histidinol to L-histidinaldehyde and then to L-histidine. The sequence is that of Histidinol dehydrogenase from Chromobacterium violaceum (strain ATCC 12472 / DSM 30191 / JCM 1249 / CCUG 213 / NBRC 12614 / NCIMB 9131 / NCTC 9757 / MK).